Here is a 91-residue protein sequence, read N- to C-terminus: MARPTGKKFDKRRQQQNPLFKRKKFCRFTAAGVDQIDYKDTETLKDFIGENGKITPARLTGTKAHYQRQLDTAIKRARFLALLPYTDQHKA.

The protein belongs to the bacterial ribosomal protein bS18 family. As to quaternary structure, part of the 30S ribosomal subunit. Forms a tight heterodimer with protein bS6.

Binds as a heterodimer with protein bS6 to the central domain of the 16S rRNA, where it helps stabilize the platform of the 30S subunit. The protein is Small ribosomal subunit protein bS18 of Burkholderia vietnamiensis (strain G4 / LMG 22486) (Burkholderia cepacia (strain R1808)).